The following is an 888-amino-acid chain: Leucine--tRNA ligase (888 aa).

The 'HIGH' region motif lies at 42–52 (PYPSGKLHMGH). A 'KMSKS' region motif is present at residues 640–644 (TMSKS). K643 contributes to the ATP binding site.

This sequence belongs to the class-I aminoacyl-tRNA synthetase family.

Its subcellular location is the cytoplasm. The catalysed reaction is tRNA(Leu) + L-leucine + ATP = L-leucyl-tRNA(Leu) + AMP + diphosphate. The chain is Leucine--tRNA ligase from Polaromonas naphthalenivorans (strain CJ2).